We begin with the raw amino-acid sequence, 293 residues long: 4-hydroxybenzoate octaprenyltransferase (293 aa).

A run of 7 helical transmembrane segments spans residues 25–45 (IGNFLLLWPMLWGLWIAAKGL), 48–68 (LKVLVVFVLGVLIMRAAGCVI), 101–121 (LFVVLCLVAFGLVLLMNPLTI), 142–162 (HFPQVHLGAAFGWAIPMAFAA), 165–185 (GAVAPVAWLLFLSAVLWATIY), 223–243 (VMLAVLVAAGLVVGLGAFWYL), and 271–291 (FLNNNWLGGLIFLGLLLDLHL).

The protein belongs to the UbiA prenyltransferase family. Mg(2+) is required as a cofactor.

The protein localises to the cell inner membrane. The catalysed reaction is all-trans-octaprenyl diphosphate + 4-hydroxybenzoate = 4-hydroxy-3-(all-trans-octaprenyl)benzoate + diphosphate. It participates in cofactor biosynthesis; ubiquinone biosynthesis. Its function is as follows. Catalyzes the prenylation of para-hydroxybenzoate (PHB) with an all-trans polyprenyl group. Mediates the second step in the final reaction sequence of ubiquinone-8 (UQ-8) biosynthesis, which is the condensation of the polyisoprenoid side chain with PHB, generating the first membrane-bound Q intermediate 3-octaprenyl-4-hydroxybenzoate. The protein is 4-hydroxybenzoate octaprenyltransferase of Alkalilimnicola ehrlichii (strain ATCC BAA-1101 / DSM 17681 / MLHE-1).